A 635-amino-acid polypeptide reads, in one-letter code: Leucine-rich repeat and fibronectin type-III domain-containing protein 4 (635 aa).

Positions 1–16 (MAPPLLLLLLASGAAA) are cleaved as a signal peptide. The region spanning 17–48 (CPLPCVCQNLSESLSTLCAHRGLLFVPPNVDR) is the LRRNT domain. The Extracellular portion of the chain corresponds to 17-518 (CPLPCVCQNL…LQAHVLGGTL (502 aa)). N-linked (GlcNAc...) asparagine glycans are attached at residues asparagine 25 and asparagine 70. LRR repeat units lie at residues 49 to 70 (RTVE…DFRN), 73 to 94 (GLVD…AFGD), 97 to 118 (SLRS…SLRG), 121 to 142 (NLQH…AFDD), 146 to 161 (SLED…RQVP), 170 to 191 (ALHT…AFAQ), and 194 to 215 (QLSR…PLFS). Residues 234–280 (NPLHCNCELLWLRRLARPDDLETCASPPGLAGRYFWAVPEGEFSCEP) form the LRRCT domain. The region spanning 281–367 (PLIARHTQRL…GEATARVELR (87 aa)) is the Ig-like domain. A disulfide bond links cysteine 302 and cysteine 351. N-linked (GlcNAc...) asparagine glycosylation is found at asparagine 324, asparagine 333, asparagine 376, and asparagine 440. The interval 373–410 (HGGNSSAEGGRPGPSDIAASARTAAEGEGTLESEPAVQ) is disordered. The region spanning 405-502 (SEPAVQVTEV…GCAHFSTLPA (98 aa)) is the Fibronectin type-III domain. A helical membrane pass occupies residues 519–539 (TVAVGGVLVAALLVFTVALLV). Residues 540-635 (RGRGAGNGRL…SAERLEESVV (96 aa)) lie on the Cytoplasmic side of the membrane. Residues 555-583 (HVQSQTNGGPSPTPKAHPPRSPPPRPQRS) are disordered. Over residues 565-580 (SPTPKAHPPRSPPPRP) the composition is skewed to pro residues. Residues serine 585 and serine 626 each carry the phosphoserine modification. Positions 632-635 (ESVV) match the PDZ-binding motif.

The protein belongs to the LRFN family. In terms of assembly, can form heteromeric complexes with LRFN1, LRFN2, LRFN3 and LRFN5. Unable to form homophilic interactions across cell junctions. Interacts with DLG1, DLG2, DLG3 and DLG4. In terms of processing, glycosylated.

It localises to the membrane. Promotes neurite outgrowth in hippocampal neurons. May play a role in redistributing DLG4 to the cell periphery. This is Leucine-rich repeat and fibronectin type-III domain-containing protein 4 (LRFN4) from Homo sapiens (Human).